Reading from the N-terminus, the 825-residue chain is PR domain zinc finger protein 1 (825 aa).

Positions proline 84–cysteine 201 constitute an SET domain. A compositionally biased stretch (low complexity) spans isoleucine 324–serine 361. The interval isoleucine 324 to glutamate 369 is disordered. The interaction with PIAS1 stretch occupies residues histidine 527–lysine 574. 4 consecutive C2H2-type zinc fingers follow at residues tyrosine 575 to histidine 597, phenylalanine 603 to histidine 625, histidine 631 to histidine 653, and tyrosine 659 to histidine 681. Residue lysine 816 forms a Glycyl lysine isopeptide (Lys-Gly) (interchain with G-Cter in SUMO1); alternate linkage. Lysine 816 is covalently cross-linked (Glycyl lysine isopeptide (Lys-Gly) (interchain with G-Cter in SUMO2); alternate).

The protein belongs to the class V-like SAM-binding methyltransferase superfamily. In terms of assembly, interacts with PRMT5. Interacts with FBXO10. Interacts with FBXO11. Interacts with multiple nuclear sumoylation E3 ligases, including CBX4, PIAS1, PIAS2, PIAS3, PIAS4, PML and RNF4, but not RANBP2. Interacts with LDB1, SMARCD3 and SMARCC1. Interacts with EEIG1; following TNFSF11/RANKL stimulation in bone marrow-derived macrophages, the interaction promotes the binding of PRDM1/BLIMP1 to the gene promoter of IRF8. Post-translationally, sumoylation at Lys-816 by PIAS1 augments transcriptional repressor activity, and is critical for plasma cell differentiation. Can be sumoylated with SUMO1 and SUMO2 by PML. Degradation of the wild-type protein mostly depends upon sumoylation, rather than ubiquitination. Desumoylated by SENP1 and SENP6. Ubiquitinated by the SCF(FBXO11) complex, leading to its degradation by the proteasome.

It localises to the nucleus. It is found in the cytoplasm. Its function is as follows. Transcription factor that mediates a transcriptional program in various innate and adaptive immune tissue-resident lymphocyte T cell types such as tissue-resident memory T (Trm), natural killer (trNK) and natural killer T (NKT) cells and negatively regulates gene expression of proteins that promote the egress of tissue-resident T-cell populations from non-lymphoid organs. Plays a role in the development, retention and long-term establishment of adaptive and innate tissue-resident lymphocyte T cell types in non-lymphoid organs, such as the skin and gut, but also in other nonbarrier tissues like liver and kidney, and therefore may provide immediate immunological protection against reactivating infections or viral reinfection. Binds specifically to the PRDI element in the promoter of the beta-interferon gene. Drives the maturation of B-lymphocytes into Ig secreting cells. Associates with the transcriptional repressor ZNF683 to chromatin at gene promoter regions. Binds to the promoter and acts as a transcriptional repressor of IRF8, thereby promotes transcription of osteoclast differentiation factors such as NFATC1 and EEIG1. This is PR domain zinc finger protein 1 (PRDM1) from Homo sapiens (Human).